A 331-amino-acid polypeptide reads, in one-letter code: tRNA-cytidine(32) 2-sulfurtransferase (331 aa).

Residues 73-78 (SGGKDS) carry the PP-loop motif motif. 3 residues coordinate [4Fe-4S] cluster: cysteine 148, cysteine 151, and cysteine 239.

This sequence belongs to the TtcA family. As to quaternary structure, homodimer. Requires Mg(2+) as cofactor. The cofactor is [4Fe-4S] cluster.

It is found in the cytoplasm. It catalyses the reaction cytidine(32) in tRNA + S-sulfanyl-L-cysteinyl-[cysteine desulfurase] + AH2 + ATP = 2-thiocytidine(32) in tRNA + L-cysteinyl-[cysteine desulfurase] + A + AMP + diphosphate + H(+). It participates in tRNA modification. Catalyzes the ATP-dependent 2-thiolation of cytidine in position 32 of tRNA, to form 2-thiocytidine (s(2)C32). The sulfur atoms are provided by the cysteine/cysteine desulfurase (IscS) system. The polypeptide is tRNA-cytidine(32) 2-sulfurtransferase (Burkholderia mallei (strain NCTC 10247)).